The following is a 298-amino-acid chain: Bifunctional protein FolD (298 aa).

NADP(+) contacts are provided by residues 165 to 167, S190, and I231; that span reads GRS.

Belongs to the tetrahydrofolate dehydrogenase/cyclohydrolase family. In terms of assembly, homodimer.

The catalysed reaction is (6R)-5,10-methylene-5,6,7,8-tetrahydrofolate + NADP(+) = (6R)-5,10-methenyltetrahydrofolate + NADPH. It carries out the reaction (6R)-5,10-methenyltetrahydrofolate + H2O = (6R)-10-formyltetrahydrofolate + H(+). Its pathway is one-carbon metabolism; tetrahydrofolate interconversion. Functionally, catalyzes the oxidation of 5,10-methylenetetrahydrofolate to 5,10-methenyltetrahydrofolate and then the hydrolysis of 5,10-methenyltetrahydrofolate to 10-formyltetrahydrofolate. The sequence is that of Bifunctional protein FolD from Prochlorococcus marinus (strain MIT 9515).